Reading from the N-terminus, the 654-residue chain is MTQTHSTELFKPNRAFAKTARIKNLCEYEDLRLDAEEDFEGFWGKLAKEKIDWMEPFSKVLDESEAPFYKWFVGGKLNVCAQCLDRHLDTRKNKAAIIFEGELGDSRIITYRELFYEVKRTANLLKNKFNVKKGDRVVIYMPMIPEAAFMMLACARIGAIHSVVFGGFSAEALRDRIIDAEAKLVITADGAYRRGKPYMLKPVVDDALAEGACPSIEKVLIVIRNKEEINYVPGRDYIYNEMIGLESAHCPPEPMDAEDPLFLLYTSGSTGKPKGVQHNQAGYILWAQTTMEWVFDVKENDTYWCTADVGWITGHTYIVYGPLAMGATTVMYEGVPIYPDTGRWWKMIEHYRVNQFYTAPTAIRLLHKEGKEEPKKYNLSNLKVLGTVGEPINPDAWNWYYNEIGGGQCPIVDTWWQTETGGHMISPLPGATPIKPGCATLPLPGIFAEVIDEEGNPKPAGEQGYLCITKPWPSMIRNIWGDPKRYESSYFSTCKKNGKPVYFAGDGAIRDERGYITITGRMDDVINVSGHRLGTAEIESAIAKHPGVAETAVVSRLDEIKGESVYAFIVLKPGYEDNVAEELQLLKEINAVITREIGPLAKADTMLFVPGLPKTRSGKIMRRILRSIARGEEITQDTSTLEDPAIVQKIQQLA.

CoA-binding positions include arginine 193–lysine 196 and threonine 313. ATP is bound by residues glycine 389–proline 391, aspartate 413–threonine 418, aspartate 506, and arginine 521. Residue serine 529 participates in CoA binding. Arginine 532 contacts ATP. Histidine 545 and valine 548 together coordinate Mg(2+). Lysine 619 bears the N6-acetyllysine mark.

It belongs to the ATP-dependent AMP-binding enzyme family. Mg(2+) is required as a cofactor. Acetylated. Deacetylation by the SIR2-homolog deacetylase activates the enzyme.

It carries out the reaction acetate + ATP + CoA = acetyl-CoA + AMP + diphosphate. Its function is as follows. Catalyzes the conversion of acetate into acetyl-CoA (AcCoA), an essential intermediate at the junction of anabolic and catabolic pathways. AcsA undergoes a two-step reaction. In the first half reaction, AcsA combines acetate with ATP to form acetyl-adenylate (AcAMP) intermediate. In the second half reaction, it can then transfer the acetyl group from AcAMP to the sulfhydryl group of CoA, forming the product AcCoA. In Wolinella succinogenes (strain ATCC 29543 / DSM 1740 / CCUG 13145 / JCM 31913 / LMG 7466 / NCTC 11488 / FDC 602W) (Vibrio succinogenes), this protein is Acetyl-coenzyme A synthetase.